The primary structure comprises 690 residues: Ectopic P granules protein 2 (690 aa).

Coiled coils occupy residues isoleucine 20–valine 181, glutamate 359–glutamate 409, leucine 458–leucine 494, and alanine 560–arginine 643. Positions tyrosine 61–leucine 64 match the LIR 1 motif. The interval aspartate 381 to leucine 385 is required for interaction with lgg-1. The interval glutamate 666–glutamate 690 is disordered. Residues glutamate 671–tryptophan 684 show a composition bias toward basic and acidic residues. An LIR 2 motif is present at residues tryptophan 684–valine 687.

Interacts with sepa-1. Interacts (via the LIR motifs) with lgg-1 and lgg-2. Shows strong interaction with lgg-1 and weak interaction with lgg-2.

The protein localises to the cytoplasm. In terms of biological role, involved in autophagy. Thought to act as an adapter protein that brings PGL granules to autophagic structures containing lgg-1. Association with other adapters such as sepa-1 is required for the accumulation and degradation of germ cell specific P-granules by autophagy in somatic cells. This ensures exclusive localization of the P-granules in germ cells. May also play a role in the removal of sepa-1 from somatic cells. The protein is Ectopic P granules protein 2 of Caenorhabditis elegans.